We begin with the raw amino-acid sequence, 471 residues long: Abscission/NoCut checkpoint regulator (471 aa).

The segment at 39–64 (GGAGQGREGRSWGEGPRGPGLGRRDL) is disordered. Residues 74–133 (ATMESRCYGCAVKFTLFKKEYGCKNCGRAFCSGCLSFSAAVPRTGNTQQKVCKQCHEVLT) form an FYVE-type zinc finger. Residues C80, C83, C96, C99, C104, C107, C125, and C128 each coordinate Zn(2+). A Phosphoserine modification is found at S144. The MIM1-A motif lies at 174-187 (DQMIAERLARLRQE). A Glycyl lysine isopeptide (Lys-Gly) (interchain with G-Cter in SUMO2) cross-link involves residue K207. T243 carries the post-translational modification Phosphothreonine. Residues 271–299 (KGGGPAASLQNDLNQGGPGSTNSKRQANW) are disordered. A compositionally biased stretch (polar residues) spans 278 to 299 (SLQNDLNQGGPGSTNSKRQANW). A phosphoserine mark is found at G286 and S293. Positions 311 to 375 (EAALELREEN…RVLQQLTEEA (65 aa)) form a coiled coil. An MIM1-B motif is present at residues 326 to 339 (ILALAKRLAMLRGQ). S354 carries the phosphoserine modification. The tract at residues 386–412 (PAEQASRPWTQPRGAEPEAQDVDPRPE) is disordered. A Phosphoserine modification is found at S463.

As to quaternary structure, interacts (via MIM1-B) with VPS4A; interaction takes place at the midbody ring following cytokinesis checkpoint activation. In terms of processing, phosphorylated in vitro at Ser-22 by AURKB; however, phosphorylation at this site could not be confirmed in vivo. In terms of tissue distribution, detected in brain, heart, skeletal muscle and kidney. Expressed in the liver (at protein level).

The protein localises to the cytoplasm. Its subcellular location is the cytoskeleton. It is found in the microtubule organizing center. It localises to the centrosome. The protein resides in the cleavage furrow. The protein localises to the midbody. Its subcellular location is the midbody ring. Key regulator of abscission step in cytokinesis: part of the cytokinesis checkpoint, a process required to delay abscission to prevent both premature resolution of intercellular chromosome bridges and accumulation of DNA damage. Together with CHMP4C, required to retain abscission-competent VPS4 (VPS4A and/or VPS4B) at the midbody ring until abscission checkpoint signaling is terminated at late cytokinesis. Deactivation of AURKB results in dephosphorylation of CHMP4C followed by its dissociation from ZFYVE19/ANCHR and VPS4 and subsequent abscission. The sequence is that of Abscission/NoCut checkpoint regulator (ZFYVE19) from Homo sapiens (Human).